A 526-amino-acid polypeptide reads, in one-letter code: Catalase (526 aa).

The segment covering 1–22 has biased composition (basic and acidic residues); it reads MADDREKSTDQMKLWKEGRGSQ. Residues 1–29 form a disordered region; sequence MADDREKSTDQMKLWKEGRGSQRPDVLTT. Residues His-75 and Asn-148 contribute to the active site. 8 residues coordinate NADP(+): His-194, Ser-201, Arg-203, Asn-213, Lys-237, Trp-303, His-305, and Lys-306. Tyr-358 lines the heme pocket.

Belongs to the catalase family. As to quaternary structure, homotetramer. It depends on heme as a cofactor. Requires NADP(+) as cofactor.

It is found in the peroxisome matrix. The catalysed reaction is 2 H2O2 = O2 + 2 H2O. Catalyzes the degradation of hydrogen peroxide (H(2)O(2)) generated by peroxisomal oxidases to water and oxygen, thereby protecting cells from the toxic effects of hydrogen peroxide. This chain is Catalase (cat), found in Danio rerio (Zebrafish).